Here is a 552-residue protein sequence, read N- to C-terminus: Urocanate hydratase (552 aa).

Residues 50–51, Gln-128, 174–176, Glu-194, Arg-199, 261–265, 271–272, and Tyr-320 each bind NAD(+); these read GG, GMG, QTSAH, and YI. The active site involves Cys-408. Gly-490 provides a ligand contact to NAD(+).

This sequence belongs to the urocanase family. NAD(+) serves as cofactor.

It localises to the cytoplasm. The catalysed reaction is 4-imidazolone-5-propanoate = trans-urocanate + H2O. It functions in the pathway amino-acid degradation; L-histidine degradation into L-glutamate; N-formimidoyl-L-glutamate from L-histidine: step 2/3. Its function is as follows. Catalyzes the conversion of urocanate to 4-imidazolone-5-propionate. This is Urocanate hydratase from Bdellovibrio bacteriovorus (strain ATCC 15356 / DSM 50701 / NCIMB 9529 / HD100).